The following is a 384-amino-acid chain: GTPase Obg (384 aa).

The region spanning 1 to 159 (MKFIDEAKIE…RSLQLELKVL (159 aa)) is the Obg domain. Disordered regions lie at residues 20–46 (ATSF…GSVW) and 129–149 (HFKS…EGET). Over residues 33 to 43 (GPDGGDGGKGG) the composition is skewed to gly residues. The span at 130–143 (FKSSVNRAPKQSTP) shows a compositional bias: polar residues. The region spanning 160–348 (ADVGLLGMPN…LVHQINQYLA (189 aa)) is the OBG-type G domain. GTP is bound by residues 166 to 173 (GMPNAGKS), 191 to 195 (FTTLH), 213 to 216 (DIPG), 284 to 287 (NKLD), and 329 to 331 (SAL). Residues Ser173 and Thr193 each coordinate Mg(2+).

It belongs to the TRAFAC class OBG-HflX-like GTPase superfamily. OBG GTPase family. In terms of assembly, monomer. Mg(2+) serves as cofactor.

It localises to the cytoplasm. In terms of biological role, an essential GTPase which binds GTP, GDP and possibly (p)ppGpp with moderate affinity, with high nucleotide exchange rates and a fairly low GTP hydrolysis rate; the half-life of the GTP-bound state is about 50 minutes. Plays a role in control of the cell cycle, stress response, ribosome biogenesis and in those bacteria that undergo differentiation, in morphogenesis control. This Neisseria gonorrhoeae (strain ATCC 700825 / FA 1090) protein is GTPase Obg.